Reading from the N-terminus, the 296-residue chain is Large ribosomal subunit protein uL29m (296 aa).

The transit peptide at 1–19 directs the protein to the mitochondrion; it reads MSITSIRALLRSAVSLART.

The protein belongs to the universal ribosomal protein uL29 family. In terms of assembly, component of the mitochondrial large ribosomal subunit. Mature mitochondrial ribosomes consist of a small (37S) and a large (54S) subunit. The 37S subunit contains at least 33 different proteins and 1 molecule of RNA (15S). The 54S subunit contains at least 45 different proteins and 1 molecule of RNA (21S).

It localises to the mitochondrion. The chain is Large ribosomal subunit protein uL29m (MRPL4) from Lodderomyces elongisporus (strain ATCC 11503 / CBS 2605 / JCM 1781 / NBRC 1676 / NRRL YB-4239) (Yeast).